Consider the following 245-residue polypeptide: Precorrin-2 C(20)-methyltransferase (245 aa).

Belongs to the precorrin methyltransferase family. As to quaternary structure, homodimer.

The enzyme catalyses precorrin-2 + S-adenosyl-L-methionine = precorrin-3A + S-adenosyl-L-homocysteine + H(+). Its pathway is cofactor biosynthesis; adenosylcobalamin biosynthesis; cob(II)yrinate a,c-diamide from precorrin-2 (aerobic route): step 1/10. Functionally, methylates precorrin-2 at the C-20 position to produce precorrin-3A. The polypeptide is Precorrin-2 C(20)-methyltransferase (cobI) (Sinorhizobium sp).